Reading from the N-terminus, the 581-residue chain is Activating signal cointegrator 1 (581 aa).

Ala2 bears the N-acetylalanine mark. Residues 100-121 form a disordered region; that stretch reads DQLKRSRRKGRNKQEVPAFPEP. The segment at 167–219 adopts a C4-type zinc-finger fold; it reads GRHPCDCLGQKHKLINNCLVCGRIVCEQEGSGPCLFCGSLVCTNEEQDILQRD. Residues 200 to 300 are mediates interaction with DDRGK1; the sequence is CLFCGSLVCT…ASDSNQWLSK (101 aa). Ser276 carries the post-translational modification Phosphoserine. A Phosphotyrosine modification is found at Tyr289. The tract at residues 300–400 is mediates interaction with UFL1; that stretch reads KVEREMLQKR…WVDNTGSTPQ (101 aa). Glycyl lysine isopeptide (Lys-Gly) (interchain with G-Cter in UFM1) cross-links involve residues Lys324 and Lys334. Residues 390 to 406 show a composition bias toward polar residues; the sequence is QWVDNTGSTPQKKTSLS. Positions 390-410 are disordered; sequence QWVDNTGSTPQKKTSLSAGPR. Residues 437–531 form the ASCH domain; the sequence is LSMHQPWASL…FQEQFPDISQ (95 aa).

Interacts with the thyroid hormone receptor/TR (via the ligand-binding domain); this interaction requires the presence of thyroid hormone. Interacts with the androgen receptor/AR; in an androgen, testosterone and dihydrotestosterone-dependent manner. Interacts with ESR1 (estrogen ligand-bound); competes with UFSP2. Interacts with UFSP2; competes with ligand-bound ESR1. Interacts with DDRGK1 and UFL1; the interaction with DDRGK1 is direct. Interacts with NCOA1. Interacts with EP300. Part of the ASC-1 complex, that contains TRIP4, ASCC1, ASCC2 and ASCC3. Identified in the RQT (ribosome quality control trigger) complex, that contains ASCC2, ASCC3 and TRIP4. Interacts with NEK6. Interacts with CSRP1. Interacts with ZCCHC4. Phosphorylated by NEK6. Post-translationally, polyufmylated by the UFM1-conjugating system composed of the enzymes UBA5, UFC1 and UFL1. Deufmylated by the protease UFSP2. Ufmylation of TRIP4 is promoted by ligand-bound nuclear receptors that compete with UFSP2 for interaction with TRIP4. Nuclear receptors-induced ufmylation promotes the recruitment of additional transcriptional coactivators like EP300 and NCOA1 and therefore the assembly of a coactivator complex facilitating nuclear receptor-mediated transcription. Ubiquitously expressed. Expressed in the spinal cord, brain, paraspinal ganglia, thyroid, and submandibular glands. Expressed at low level in all the muscles (at protein level) but with higher expression in axial than in limb muscles.

It localises to the nucleus. The protein localises to the cytoplasm. Its subcellular location is the cytosol. The protein resides in the cytoskeleton. It is found in the microtubule organizing center. It localises to the centrosome. In terms of biological role, transcription coactivator which associates with nuclear receptors, transcriptional coactivators including EP300, CREBBP and NCOA1, and basal transcription factors like TBP and TFIIA to facilitate nuclear receptors-mediated transcription. May thereby play an important role in establishing distinct coactivator complexes under different cellular conditions. Plays a role in thyroid hormone receptor and estrogen receptor transactivation. Also involved in androgen receptor transactivation. Plays a pivotal role in the transactivation of NF-kappa-B, SRF and AP1. Acts as a mediator of transrepression between nuclear receptor and either AP1 or NF-kappa-B. May play a role in the development of neuromuscular junction. May play a role in late myogenic differentiation. Also functions as part of the RQC trigger (RQT) complex that activates the ribosome quality control (RQC) pathway, a pathway that degrades nascent peptide chains during problematic translation. The sequence is that of Activating signal cointegrator 1 from Mus musculus (Mouse).